The chain runs to 355 residues: 3-dehydroquinate synthase (355 aa).

NAD(+) is bound by residues 98–102 (GVVGD), 122–123 (TT), lysine 135, lysine 144, and 162–165 (TLDT). The Zn(2+) site is built by glutamate 177, histidine 240, and histidine 257.

It belongs to the sugar phosphate cyclases superfamily. Dehydroquinate synthase family. Co(2+) serves as cofactor. Requires Zn(2+) as cofactor. The cofactor is NAD(+).

It is found in the cytoplasm. It carries out the reaction 7-phospho-2-dehydro-3-deoxy-D-arabino-heptonate = 3-dehydroquinate + phosphate. It participates in metabolic intermediate biosynthesis; chorismate biosynthesis; chorismate from D-erythrose 4-phosphate and phosphoenolpyruvate: step 2/7. Functionally, catalyzes the conversion of 3-deoxy-D-arabino-heptulosonate 7-phosphate (DAHP) to dehydroquinate (DHQ). The sequence is that of 3-dehydroquinate synthase from Dictyoglomus turgidum (strain DSM 6724 / Z-1310).